Consider the following 282-residue polypeptide: Chromatin modification-related protein YNG2 (282 aa).

A coiled-coil region spans residues 35–86 (LIEEKKKYEQKESQIHKFIRQQGSIPKHPQEDGLDKEIKESLLKCQSLQREK). Positions 123-217 (DGDMDSAAEA…KGQNGSPENE (95 aa)) are disordered. The segment covering 129 to 143 (AAEASRESSVVSNSS) has biased composition (low complexity). Serine 183 carries the post-translational modification Phosphoserine. Position 185 is a phosphothreonine (threonine 185). Serine 188 is modified (phosphoserine). Residues 191–203 (IEKKIARTKEFKN) are compositionally biased toward basic and acidic residues. Polar residues predominate over residues 204–214 (SRNGKGQNGSP). A PHD-type zinc finger spans residues 222–271 (TLYCFCQRVSFGEMVACDGPNCKYEWFHYDCVNLKEPPKGTWYCPECKIE). The Zn(2+) site is built by cysteine 225, cysteine 227, cysteine 238, cysteine 243, histidine 249, cysteine 252, cysteine 265, and cysteine 268.

It belongs to the ING family. In terms of assembly, interacts with H3K4me3 and to a lesser extent with H3K4me2. Component of the NuA4 histone acetyltransferase complex composed of at least ACT1, ARP4, YAF9, VID21, SWC4, EAF3, EAF5, EAF6, EAF7, EPL1, ESA1, TRA1 and YNG2.

The protein resides in the nucleus. In terms of biological role, component of the NuA4 histone acetyltransferase complex which is involved in transcriptional activation of selected genes principally by acetylation of nucleosomal histone H4 and H2A. The NuA4 complex is also involved in DNA repair. Involved in cell cycle progression and meiosis. This is Chromatin modification-related protein YNG2 (YNG2) from Saccharomyces cerevisiae (strain ATCC 204508 / S288c) (Baker's yeast).